The following is a 265-amino-acid chain: Hydroxyethylthiazole kinase (265 aa).

Substrate is bound at residue Met50. Positions 125 and 171 each coordinate ATP. Gly198 is a binding site for substrate.

This sequence belongs to the Thz kinase family. It depends on Mg(2+) as a cofactor.

It carries out the reaction 5-(2-hydroxyethyl)-4-methylthiazole + ATP = 4-methyl-5-(2-phosphooxyethyl)-thiazole + ADP + H(+). It functions in the pathway cofactor biosynthesis; thiamine diphosphate biosynthesis; 4-methyl-5-(2-phosphoethyl)-thiazole from 5-(2-hydroxyethyl)-4-methylthiazole: step 1/1. In terms of biological role, catalyzes the phosphorylation of the hydroxyl group of 4-methyl-5-beta-hydroxyethylthiazole (THZ). The sequence is that of Hydroxyethylthiazole kinase from Salmonella choleraesuis (strain SC-B67).